The primary structure comprises 181 residues: Photosystem I assembly protein Ycf4 (181 aa).

Helical transmembrane passes span 19-39 (YFWASLLLVGGLMFLLAGISS) and 61-81 (IVMMFYGTLSFGLSIYIMATL).

The protein belongs to the Ycf4 family.

It is found in the plastid. The protein resides in the chloroplast thylakoid membrane. Seems to be required for the assembly of the photosystem I complex. This Thalassiosira pseudonana (Marine diatom) protein is Photosystem I assembly protein Ycf4.